Consider the following 257-residue polypeptide: Phosphonates import ATP-binding protein PhnC (257 aa).

One can recognise an ABC transporter domain in the interval 7–251 (IQLKDVSKIY…VFTDIYNGGD (245 aa)). 40–47 (GLSGAGKS) is a binding site for ATP.

The protein belongs to the ABC transporter superfamily. Phosphonates importer (TC 3.A.1.9.1) family. The complex is composed of two ATP-binding proteins (PhnC), two transmembrane proteins (PhnE) and a solute-binding protein (PhnD).

Its subcellular location is the cell membrane. The enzyme catalyses phosphonate(out) + ATP + H2O = phosphonate(in) + ADP + phosphate + H(+). Its function is as follows. Part of the ABC transporter complex PhnCDE involved in phosphonates import. Responsible for energy coupling to the transport system. This chain is Phosphonates import ATP-binding protein PhnC, found in Lactobacillus acidophilus (strain ATCC 700396 / NCK56 / N2 / NCFM).